The primary structure comprises 304 residues: Ribosomal protein L11 methyltransferase (304 aa).

The S-adenosyl-L-methionine site is built by Thr156, Gly177, Asp199, and Asn240.

Belongs to the methyltransferase superfamily. PrmA family.

It is found in the cytoplasm. It carries out the reaction L-lysyl-[protein] + 3 S-adenosyl-L-methionine = N(6),N(6),N(6)-trimethyl-L-lysyl-[protein] + 3 S-adenosyl-L-homocysteine + 3 H(+). Functionally, methylates ribosomal protein L11. The polypeptide is Ribosomal protein L11 methyltransferase (Symbiobacterium thermophilum (strain DSM 24528 / JCM 14929 / IAM 14863 / T)).